A 287-amino-acid chain; its full sequence is Shikimate dehydrogenase (NADP(+)) (287 aa).

Shikimate contacts are provided by residues 20–22 and threonine 67; that span reads SRS. Lysine 71 serves as the catalytic Proton acceptor. Residue glutamate 84 coordinates NADP(+). Shikimate contacts are provided by asparagine 93 and aspartate 108. Residues 132–136 and methionine 226 each bind NADP(+); that span reads GAGGA. Tyrosine 228 is a binding site for shikimate. NADP(+) is bound at residue glycine 250.

It belongs to the shikimate dehydrogenase family. As to quaternary structure, homodimer.

It catalyses the reaction shikimate + NADP(+) = 3-dehydroshikimate + NADPH + H(+). The protein operates within metabolic intermediate biosynthesis; chorismate biosynthesis; chorismate from D-erythrose 4-phosphate and phosphoenolpyruvate: step 4/7. Functionally, involved in the biosynthesis of the chorismate, which leads to the biosynthesis of aromatic amino acids. Catalyzes the reversible NADPH linked reduction of 3-dehydroshikimate (DHSA) to yield shikimate (SA). The polypeptide is Shikimate dehydrogenase (NADP(+)) (Bordetella petrii (strain ATCC BAA-461 / DSM 12804 / CCUG 43448)).